Here is a 514-residue protein sequence, read N- to C-terminus: Probable peptidoglycan glycosyltransferase FtsW (514 aa).

9 helical membrane-spanning segments follow: residues isoleucine 45 to alanine 65, isoleucine 86 to tryptophan 106, threonine 108 to glycine 128, tryptophan 137 to threonine 157, valine 182 to valine 202, leucine 218 to phenylalanine 238, isoleucine 301 to methionine 321, valine 347 to proline 367, and leucine 373 to leucine 393. Disordered stretches follow at residues glycine 411–histidine 437 and aspartate 449–lysine 501.

It belongs to the SEDS family. FtsW subfamily.

Its subcellular location is the cell inner membrane. The catalysed reaction is [GlcNAc-(1-&gt;4)-Mur2Ac(oyl-L-Ala-gamma-D-Glu-L-Lys-D-Ala-D-Ala)](n)-di-trans,octa-cis-undecaprenyl diphosphate + beta-D-GlcNAc-(1-&gt;4)-Mur2Ac(oyl-L-Ala-gamma-D-Glu-L-Lys-D-Ala-D-Ala)-di-trans,octa-cis-undecaprenyl diphosphate = [GlcNAc-(1-&gt;4)-Mur2Ac(oyl-L-Ala-gamma-D-Glu-L-Lys-D-Ala-D-Ala)](n+1)-di-trans,octa-cis-undecaprenyl diphosphate + di-trans,octa-cis-undecaprenyl diphosphate + H(+). It functions in the pathway cell wall biogenesis; peptidoglycan biosynthesis. Its function is as follows. Peptidoglycan polymerase that is essential for cell division. The polypeptide is Probable peptidoglycan glycosyltransferase FtsW (Alteromonas naphthalenivorans).